We begin with the raw amino-acid sequence, 168 residues long: Small ribosomal subunit protein uS7c (168 aa).

Belongs to the universal ribosomal protein uS7 family. Part of the 30S ribosomal subunit.

The protein resides in the plastid. Its subcellular location is the chloroplast. One of the primary rRNA binding proteins, it binds directly to 16S rRNA where it nucleates assembly of the head domain of the 30S subunit. This is Small ribosomal subunit protein uS7c (rps7) from Chlamydomonas reinhardtii (Chlamydomonas smithii).